Consider the following 378-residue polypeptide: UPF0754 membrane protein BCAH187_A1042 (378 aa).

A run of 2 helical transmembrane segments spans residues 1 to 21 (MNIWLSMLTTTGLGAIIGGFT) and 357 to 377 (YLGALLGGMIGIVQGLLLLFL).

It belongs to the UPF0754 family.

It localises to the cell membrane. This chain is UPF0754 membrane protein BCAH187_A1042, found in Bacillus cereus (strain AH187).